We begin with the raw amino-acid sequence, 215 residues long: Nascent polypeptide-associated complex subunit alpha (215 aa).

Positions 1–81 (MPGEATDTVP…SEKKARKAMS (81 aa)) are disordered. The segment covering 9–28 (VPATEQELPQPQAETGSGTE) has biased composition (polar residues). A compositionally biased stretch (acidic residues) spans 29–42 (SDSDESVPELEEQD). Phosphoserine; by ILK1 is present on Ser-43. Residues 44 to 57 (TQATTQQAQLAAAA) show a composition bias toward low complexity. The tract at residues 69–80 (QSRSEKKARKAM) is required for DNA-binding. Positions 70-135 (SRSEKKARKA…AKIEDLSQQA (66 aa)) constitute an NAC-A/B domain. An RNA/DNA-binding region spans residues 93-108 (RVTIRKSKNILFVITK). Ser-132 carries the phosphoserine modification. Position 142 is an N6-acetyllysine; alternate (Lys-142). Lys-142 is covalently cross-linked (Glycyl lysine isopeptide (Lys-Gly) (interchain with G-Cter in SUMO2); alternate). Thr-159 is subject to Phosphothreonine; by GSK3-beta. The residue at position 161 (Thr-161) is a Phosphothreonine. Residues Ser-166, Ser-186, Ser-191, and Ser-203 each carry the phosphoserine modification. The region spanning 176–213 (VEVKDIELVMSQANVSRAKAVRALKNNSNDIVNAIMEL) is the UBA domain.

It belongs to the NAC-alpha family. In terms of assembly, part of the nascent polypeptide-associated complex (NAC), which is a heterodimer of NACA and BTF3 (via NAC-A/B domains). NAC associates with ribosomes through the BTF3/NACB subunit and contacts the ribosomal protein L23, which is positioned near the exiting site. Both subunits can contact nascent polypeptide chains. NACA may also form homodimers, and only this form binds DNA. Interacts with TBP and JUN. Post-translationally, phosphorylation of Ser-43 by ILK during cell adhesion may promote nuclear localization. Phosphorylation of Thr-159 by GSK3B may promote proteasome mediated degradation.

The protein resides in the cytoplasm. It localises to the nucleus. Functionally, prevents inappropriate targeting of non-secretory polypeptides to the endoplasmic reticulum (ER). Binds to nascent polypeptide chains as they emerge from the ribosome and blocks their interaction with the signal recognition particle (SRP), which normally targets nascent secretory peptides to the ER. Also reduces the inherent affinity of ribosomes for protein translocation sites in the ER membrane (M sites). May act as a specific coactivator for JUN, binding to DNA and stabilizing the interaction of JUN homodimers with target gene promoters. The sequence is that of Nascent polypeptide-associated complex subunit alpha (NACA) from Bos taurus (Bovine).